Consider the following 336-residue polypeptide: Anthranilate phosphoribosyltransferase (336 aa).

5-phospho-alpha-D-ribose 1-diphosphate is bound by residues Gly-82, 85–86 (GD), Thr-90, 92–95 (NIST), 110–118 (KHGNRFASG), and Ser-122. Gly-82 contacts anthranilate. Ser-94 serves as a coordination point for Mg(2+). Asn-113 contacts anthranilate. Arg-168 contributes to the anthranilate binding site. Residues Asp-227 and Glu-228 each contribute to the Mg(2+) site.

It belongs to the anthranilate phosphoribosyltransferase family. Homodimer. It depends on Mg(2+) as a cofactor.

The catalysed reaction is N-(5-phospho-beta-D-ribosyl)anthranilate + diphosphate = 5-phospho-alpha-D-ribose 1-diphosphate + anthranilate. It functions in the pathway amino-acid biosynthesis; L-tryptophan biosynthesis; L-tryptophan from chorismate: step 2/5. Functionally, catalyzes the transfer of the phosphoribosyl group of 5-phosphorylribose-1-pyrophosphate (PRPP) to anthranilate to yield N-(5'-phosphoribosyl)-anthranilate (PRA). The protein is Anthranilate phosphoribosyltransferase of Desulfitobacterium hafniense (strain DSM 10664 / DCB-2).